Consider the following 217-residue polypeptide: N-(5'-phosphoribosyl)anthranilate isomerase (217 aa).

It belongs to the TrpF family.

The enzyme catalyses N-(5-phospho-beta-D-ribosyl)anthranilate = 1-(2-carboxyphenylamino)-1-deoxy-D-ribulose 5-phosphate. It functions in the pathway amino-acid biosynthesis; L-tryptophan biosynthesis; L-tryptophan from chorismate: step 3/5. In Acaryochloris marina (strain MBIC 11017), this protein is N-(5'-phosphoribosyl)anthranilate isomerase.